We begin with the raw amino-acid sequence, 410 residues long: Imidazolonepropionase (410 aa).

His71 and His73 together coordinate Fe(3+). Zn(2+) contacts are provided by His71 and His73. The 4-imidazolone-5-propanoate site is built by Arg80, Tyr143, and His175. Residue Tyr143 coordinates N-formimidoyl-L-glutamate. His235 lines the Fe(3+) pocket. Zn(2+) is bound at residue His235. Residue Glu238 coordinates 4-imidazolone-5-propanoate. A Fe(3+)-binding site is contributed by Asp309. Asp309 contributes to the Zn(2+) binding site.

Belongs to the metallo-dependent hydrolases superfamily. HutI family. Requires Zn(2+) as cofactor. It depends on Fe(3+) as a cofactor.

It localises to the cytoplasm. It catalyses the reaction 4-imidazolone-5-propanoate + H2O = N-formimidoyl-L-glutamate. The protein operates within amino-acid degradation; L-histidine degradation into L-glutamate; N-formimidoyl-L-glutamate from L-histidine: step 3/3. In terms of biological role, catalyzes the hydrolytic cleavage of the carbon-nitrogen bond in imidazolone-5-propanoate to yield N-formimidoyl-L-glutamate. It is the third step in the universal histidine degradation pathway. The chain is Imidazolonepropionase from Thermoplasma acidophilum (strain ATCC 25905 / DSM 1728 / JCM 9062 / NBRC 15155 / AMRC-C165).